The following is a 132-amino-acid chain: Agouti-related protein (132 aa).

A signal peptide spans 1 to 20; sequence MLTAAVLSCALLLALPATRG. Positions 21–82 are excised as a propeptide; that stretch reads AQMGLAPMEG…VLDLQDREPR (62 aa). 5 disulfides stabilise this stretch: cysteine 87/cysteine 102, cysteine 94/cysteine 108, cysteine 101/cysteine 119, cysteine 105/cysteine 129, and cysteine 110/cysteine 117. Positions 87–129 constitute an Agouti domain; that stretch reads CVRLHESCLGQQVPCCDPCATCYCRFFNAFCYCRKLGTAMNPC. The interval 111-113 is interaction with melanocortin receptors; the sequence is RFF.

Interacts with melanocortin receptors MC3R, MC4R and MC5R. In terms of tissue distribution, expressed primarily in the adrenal gland, subthalamic nucleus, and hypothalamus, with a lower level of expression occurring in testis, lung, and kidney.

It is found in the secreted. It localises to the golgi apparatus lumen. Functionally, plays a role in weight homeostasis. Involved in the control of feeding behavior through the central melanocortin system. Acts as alpha melanocyte-stimulating hormone antagonist by inhibiting cAMP production mediated by stimulation of melanocortin receptors within the hypothalamus and adrenal gland. Has very low activity with MC5R. Is an inverse agonist for MC3R and MC4R being able to suppress their constitutive activity. It promotes MC3R and MC4R endocytosis in an arrestin-dependent manner. The chain is Agouti-related protein (AGRP) from Homo sapiens (Human).